The sequence spans 314 residues: Lysophospholipase D GDPD1 (314 aa).

Residues 1-3 (MSS) lie on the Extracellular side of the membrane. Residues 4-24 (TAAFCLLSTLGGYLVTSFLLL) form a helical membrane-spanning segment. The Cytoplasmic portion of the chain corresponds to 25–195 (KYPALLHQRK…VDKCYKENSD (171 aa)). Residues 40 to 309 (SRHISHRGGA…DYPTKLKEFL (270 aa)) form the GP-PDE domain. A divalent metal cation-binding residues include Glu72, Asp74, and His87. A helical membrane pass occupies residues 196–216 (IPILFSLQRVLLILGLFFTGL). Residues 217–314 (LPFVPIREQF…LKEFLNNMSA (98 aa)) are Extracellular-facing.

It belongs to the glycerophosphoryl diester phosphodiesterase family.

It localises to the cytoplasm. The protein resides in the membrane. Its subcellular location is the perinuclear region. It is found in the endoplasmic reticulum. It catalyses the reaction a 1-O-alkyl-sn-glycero-3-phosphocholine + H2O = a 1-O-alkyl-sn-glycero-3-phosphate + choline + H(+). The enzyme catalyses 1-hexadecanoyl-sn-glycero-3-phosphocholine + H2O = 1-hexadecanoyl-sn-glycero-3-phosphate + choline + H(+). It carries out the reaction 1-hexadecanoyl-sn-glycero-3-phosphoethanolamine + H2O = 1-hexadecanoyl-sn-glycero-3-phosphate + ethanolamine + H(+). The catalysed reaction is N-hexadecanoyl-sn-glycero-3-phosphoethanolamine + H2O = N-hexadecanoylethanolamine + sn-glycerol 3-phosphate + H(+). It catalyses the reaction N-(5Z,8Z,11Z,14Z-eicosatetraenoyl)-1-(9Z-octadecenoyl)-sn-glycero-3-phosphoethanolamine + H2O = N-(5Z,8Z,11Z,14Z-eicosatetraenoyl)-ethanolamine + 1-(9Z-octadecenoyl)-sn-glycero-3-phosphate + H(+). The enzyme catalyses N,1-di-(9Z-octadecenoyl)-sn-glycero-3-phosphoethanolamine + H2O = N-(9Z-octadecenoyl) ethanolamine + 1-(9Z-octadecenoyl)-sn-glycero-3-phosphate + H(+). It carries out the reaction N-hexadecanoyl-1-(9Z-octadecenoyl)-sn-glycero-3-phosphoethanolamine + H2O = N-hexadecanoylethanolamine + 1-(9Z-octadecenoyl)-sn-glycero-3-phosphate + H(+). The catalysed reaction is 1-O-hexadecyl-sn-glycero-3-phosphocholine + H2O = 1-O-hexadecyl-sn-glycero-3-phosphate + choline + H(+). It catalyses the reaction 1-(9Z-octadecenoyl)-sn-glycero-3-phosphocholine + H2O = 1-(9Z-octadecenoyl)-sn-glycero-3-phosphate + choline + H(+). The enzyme catalyses N,1-dihexadecanoyl-sn-glycero-3-phosphoethanolamine + H2O = N-hexadecanoylethanolamine + 1-hexadecanoyl-sn-glycero-3-phosphate + H(+). It carries out the reaction 1-O-(1Z-octadecenyl)-sn-glycero-3-phospho-(N-5Z,8Z,11Z,14Z-eicosatetraenoyl)-ethanolamine + H2O = 1-O-(1Z-octadecenyl)-sn-glycero-3-phosphate + N-(5Z,8Z,11Z,14Z-eicosatetraenoyl)-ethanolamine + H(+). The catalysed reaction is 1-O-(1Z-octadecenyl)-sn-glycero-3-phospho-(N-9Z-octadecenoyl)-ethanolamine + H2O = 1-O-(1Z-octadecenyl)-sn-glycero-3-phosphate + N-(9Z-octadecenoyl) ethanolamine + H(+). It catalyses the reaction 1-O-(1Z-octadecenyl)-sn-glycero-3-phospho-N-hexadecanoyl-ethanolamine + H2O = 1-O-(1Z-octadecenyl)-sn-glycero-3-phosphate + N-hexadecanoylethanolamine + H(+). Lysophospholipase D activity is increased by magnesium and manganese and inhibited by calcium in a concentration dependent manner. Loss of lysophospholipase D activity by addition of EDTA. Hydrolyzes lysoglycerophospholipids to produce lysophosphatidic acid (LPA) and the corresponding amines. Shows a preference for 1-O-alkyl-sn-glycero-3-phosphocholine (lyso-PAF), lysophosphatidylethanolamine (lyso-PE) and lysophosphatidylcholine (lyso-PC). May be involved in bioactive N-acylethanolamine biosynthesis from both N-acyl-lysoplasmenylethanolamin (N-acyl-lysoPlsEt) and N-acyl-lysophosphatidylethanolamin (N-acyl-lysoPE). In addition, hydrolyzes glycerophospho-N-acylethanolamine to N-acylethanolamine. Does not display glycerophosphodiester phosphodiesterase activity, since it cannot hydrolyze either glycerophosphoinositol or glycerophosphocholine. The chain is Lysophospholipase D GDPD1 from Rattus norvegicus (Rat).